Reading from the N-terminus, the 233-residue chain is Esterase FUS5 (233 aa).

Catalysis depends on charge relay system residues Ser-105, Asp-159, and His-187.

This sequence belongs to the LovG family.

Functionally, esterase; part of the gene cluster that mediates the biosynthesis of the mycotoxin fusarin C. Within the cluster, FUS1, FUS2, FUS8 and FUS9 are sufficient for fusarin production. The other FUS cluster members are not essential for fusarin C biosynthesis. The chain is Esterase FUS5 from Gibberella fujikuroi (strain CBS 195.34 / IMI 58289 / NRRL A-6831) (Bakanae and foot rot disease fungus).